Reading from the N-terminus, the 497-residue chain is Acetyl-coenzyme A carboxylase carboxyl transferase subunit beta (497 aa).

A CoA carboxyltransferase N-terminal domain is found at Leu217–Tyr489. Zn(2+) is bound by residues Cys221, Cys224, Cys240, and Cys243. The C4-type zinc-finger motif lies at Cys221–Cys243.

This sequence belongs to the AccD/PCCB family. As to quaternary structure, acetyl-CoA carboxylase is a heterohexamer composed of biotin carboxyl carrier protein, biotin carboxylase and 2 subunits each of ACCase subunit alpha and ACCase plastid-coded subunit beta (accD). It depends on Zn(2+) as a cofactor.

The protein localises to the plastid. The catalysed reaction is N(6)-carboxybiotinyl-L-lysyl-[protein] + acetyl-CoA = N(6)-biotinyl-L-lysyl-[protein] + malonyl-CoA. It functions in the pathway lipid metabolism; malonyl-CoA biosynthesis; malonyl-CoA from acetyl-CoA: step 1/1. Component of the acetyl coenzyme A carboxylase (ACC) complex. Biotin carboxylase (BC) catalyzes the carboxylation of biotin on its carrier protein (BCCP) and then the CO(2) group is transferred by the transcarboxylase to acetyl-CoA to form malonyl-CoA. In Cuscuta reflexa (Southern Asian dodder), this protein is Acetyl-coenzyme A carboxylase carboxyl transferase subunit beta.